The sequence spans 126 residues: Aspartate 1-decarboxylase (126 aa).

Catalysis depends on Ser25, which acts as the Schiff-base intermediate with substrate; via pyruvic acid. Ser25 carries the pyruvic acid (Ser) modification. Position 57 (Thr57) interacts with substrate. Tyr58 acts as the Proton donor in catalysis. Position 73 to 75 (73 to 75 (GAA)) interacts with substrate.

Belongs to the PanD family. In terms of assembly, heterooctamer of four alpha and four beta subunits. The cofactor is pyruvate. Post-translationally, is synthesized initially as an inactive proenzyme, which is activated by self-cleavage at a specific serine bond to produce a beta-subunit with a hydroxyl group at its C-terminus and an alpha-subunit with a pyruvoyl group at its N-terminus.

The protein resides in the cytoplasm. It carries out the reaction L-aspartate + H(+) = beta-alanine + CO2. It functions in the pathway cofactor biosynthesis; (R)-pantothenate biosynthesis; beta-alanine from L-aspartate: step 1/1. In terms of biological role, catalyzes the pyruvoyl-dependent decarboxylation of aspartate to produce beta-alanine. In Cellvibrio japonicus (strain Ueda107) (Pseudomonas fluorescens subsp. cellulosa), this protein is Aspartate 1-decarboxylase.